The following is a 600-amino-acid chain: Pyranose dehydrogenase 2 (600 aa).

The N-terminal stretch at 1-25 (MLSRVAKLNSRLVSLALLGSQIAFG) is a signal peptide. N-linked (GlcNAc...) asparagine glycans are attached at residues N99 and N114. Position 127 is a tele-8alpha-FAD histidine (H127). N199, N275, and N342 each carry an N-linked (GlcNAc...) asparagine glycan. The active-site Proton acceptor is the H535. H579 is a catalytic residue.

It belongs to the GMC oxidoreductase family. Monomer. FAD is required as a cofactor. In terms of processing, N-glycosylated.

It is found in the secreted. It carries out the reaction pyranose + acceptor = pyranos-2-ulose + reduced acceptor.. The catalysed reaction is pyranose + acceptor = pyranos-3-ulose + reduced acceptor.. It catalyses the reaction pyranose + acceptor = pyranos-2,3-diulose + reduced acceptor.. The enzyme catalyses a pyranoside + acceptor = a pyranosid-3-ulose + reduced acceptor.. It carries out the reaction a pyranoside + acceptor = a pyranosid-3,4-diulose + reduced acceptor.. Functionally, catalyzes the single-oxidation or sequential double oxidation reaction of carbohydrates primarily at carbon-2 and/or carbon-3 with the concomitant reduction of the flavin. The enzyme exhibits a broad sugar substrate specificity, oxidizing different aldopyranoses to the corresponding C-1, C-2, C-3 or C-1,2, C-2,3 and C-3,4 (di)dehydro sugars with substrate-specific regioselectivity. Accepts only a narrow range of electron acceptors such as substituted benzoquinones and complexed metal ions and reacts extremely slowly with O(2) as acceptor. May play a role in the natural recycling of plant matter by oxidizing all major monosaccharides in lignocellulose and by reducing quinone compounds or reactive radical species generated during lignin depolymerization. The chain is Pyranose dehydrogenase 2 from Leucoagaricus meleagris (Western flat-topped agaric).